The sequence spans 130 residues: Large ribosomal subunit protein bL17 (130 aa).

The protein belongs to the bacterial ribosomal protein bL17 family. As to quaternary structure, part of the 50S ribosomal subunit. Contacts protein L32.

This is Large ribosomal subunit protein bL17 from Buchnera aphidicola subsp. Acyrthosiphon pisum (strain 5A).